The chain runs to 507 residues: Probable lipid II flippase MurJ (507 aa).

Transmembrane regions (helical) follow at residues 3-23 (LFRSGIILAFLTFIARIFGLV), 54-74 (IFAEGALSSVFIPIYNEKMLI), 92-112 (LTLIVIIALMQIFMPQLILCI), 132-152 (ITIPYLIFVSLTALLGGILNS), 156-176 (FAAFAFSPIILSVCVIIFTLI), 185-205 (ISISVSLIIAGILQVVFMFIC), 268-288 (IYQFPLSIIGTSFSTILLPEM), 310-330 (IGLLLSLPATFGIIILSHPIT), 351-371 (ISAFALGLPAFILAKILTPIF), 379-399 (TPLKITLFSIIINTNMNLLLM), 405-425 (IGIAVGTSIAAWYNLGLLYSY), 438-458 (IKLFCAKILLCCTLMSIIIAL), and 472-492 (LLIKVSMLGSTIIIGVAIFFG).

It belongs to the MurJ/MviN family.

The protein resides in the cell inner membrane. It functions in the pathway cell wall biogenesis; peptidoglycan biosynthesis. Its function is as follows. Involved in peptidoglycan biosynthesis. Transports lipid-linked peptidoglycan precursors from the inner to the outer leaflet of the cytoplasmic membrane. This is Probable lipid II flippase MurJ from Rickettsia prowazekii (strain Madrid E).